The primary structure comprises 149 residues: Basic phospholipase A2 homolog MitTx-beta (149 aa).

The N-terminal stretch at 1–30 (MDKMNPAHLLVLAAVCVSLLGASSIPPQAL) is a signal peptide. Cystine bridges form between Cys-41–Cys-100, Cys-55–Cys-148, Cys-57–Cys-73, Cys-72–Cys-130, Cys-79–Cys-123, Cys-89–Cys-116, and Cys-109–Cys-121.

It belongs to the phospholipase A2 family. Group I subfamily. K49 sub-subfamily. Heterodimer of an alpha (Kunitz-type) and a beta (phospholipase A2 homolog) chains; non-covalently-linked. Expressed by the venom gland.

It is found in the secreted. Functionally, heterodimer: MitTx, a heteromeric complex between Kunitz- and phospholipase-A2-like proteins, potently, persistently and selectively activates rat and chicken acid-sensing ion channel ASIC1. Both alternatively spliced rat isoforms ASIC1a and ASIC1b are activated, with a higher potency for ASIC1a (EC(50)=9.4 nM) vs ASIC1b (EC(50)=23 nM). The rat ASIC3 subtype is also sensitive to the heterodimer, but with a lower potency (EC(50)=830 nM). On rat ASIC2a, the toxin shows a very weak activation, but produces a remarkable potentiation (&gt;100-fold) of protons when the extracellular pH drops below neutrality. Moderate and weak activations are also observed on the heterotrimers Asic1a-Asic2a and Asic1a-Asic3 (expressed in CHO cells), respectively. The binding sites of the beta subunit of MitTx and the spider psalmotoxin-1 toxin overlap, explaining why these toxins are mutually exclusive. In vivo, the heterodimer elicits robust pain-related behavior in mice by activation of ASIC1 channels on capsaicin-sensitive nerve fibers. In terms of biological role, monomer: does not have phospholipase A2 activity but may maintain some lipid-binding character from its PLA2 lineage, which could aid in effecting neuronal depolarization. The protein is Basic phospholipase A2 homolog MitTx-beta of Micrurus tener tener (Texas coral snake).